Reading from the N-terminus, the 644-residue chain is 3D-(3,5/4)-trihydroxycyclohexane-1,2-dione hydrolase (644 aa).

A thiamine diphosphate-binding site is contributed by E65. Residues 442 to 522 form a thiamine pyrophosphate binding region; that stretch reads SLPGDLQRMW…INVLLFDNSG (81 aa). The Mg(2+) site is built by D493 and N520.

This sequence belongs to the TPP enzyme family. Mg(2+) serves as cofactor. Requires thiamine diphosphate as cofactor.

The enzyme catalyses 3D-3,5/4-trihydroxycyclohexane-1,2-dione + H2O = 5-deoxy-D-glucuronate + H(+). It participates in polyol metabolism; myo-inositol degradation into acetyl-CoA; acetyl-CoA from myo-inositol: step 3/7. Its function is as follows. Involved in the cleavage of the C1-C2 bond of 3D-(3,5/4)-trihydroxycyclohexane-1,2-dione (THcHDO) to yield 5-deoxy-glucuronate (5DG). This chain is 3D-(3,5/4)-trihydroxycyclohexane-1,2-dione hydrolase, found in Bacillus thuringiensis (strain Al Hakam).